A 425-amino-acid chain; its full sequence is UPF0597 protein VF_0641 (425 aa).

This sequence belongs to the UPF0597 family.

The sequence is that of UPF0597 protein VF_0641 from Aliivibrio fischeri (strain ATCC 700601 / ES114) (Vibrio fischeri).